A 304-amino-acid chain; its full sequence is Acetylglutamate kinase (304 aa).

Substrate is bound by residues 72-73, arginine 94, and asparagine 199; that span reads GG.

It belongs to the acetylglutamate kinase family. ArgB subfamily.

It localises to the cytoplasm. It carries out the reaction N-acetyl-L-glutamate + ATP = N-acetyl-L-glutamyl 5-phosphate + ADP. It functions in the pathway amino-acid biosynthesis; L-arginine biosynthesis; N(2)-acetyl-L-ornithine from L-glutamate: step 2/4. Functionally, catalyzes the ATP-dependent phosphorylation of N-acetyl-L-glutamate. The sequence is that of Acetylglutamate kinase from Methylobacterium nodulans (strain LMG 21967 / CNCM I-2342 / ORS 2060).